A 264-amino-acid polypeptide reads, in one-letter code: Thymidylate synthase (264 aa).

A dUMP-binding site is contributed by arginine 21. A (6R)-5,10-methylene-5,6,7,8-tetrahydrofolate-binding site is contributed by histidine 51. Arginine 126–arginine 127 contributes to the dUMP binding site. The active-site Nucleophile is cysteine 146. DUMP is bound by residues arginine 166 to aspartate 169, asparagine 177, and histidine 207 to tyrosine 209. Aspartate 169 serves as a coordination point for (6R)-5,10-methylene-5,6,7,8-tetrahydrofolate. Alanine 263 provides a ligand contact to (6R)-5,10-methylene-5,6,7,8-tetrahydrofolate.

Belongs to the thymidylate synthase family. Bacterial-type ThyA subfamily. As to quaternary structure, homodimer.

It is found in the cytoplasm. It carries out the reaction dUMP + (6R)-5,10-methylene-5,6,7,8-tetrahydrofolate = 7,8-dihydrofolate + dTMP. It functions in the pathway pyrimidine metabolism; dTTP biosynthesis. In terms of biological role, catalyzes the reductive methylation of 2'-deoxyuridine-5'-monophosphate (dUMP) to 2'-deoxythymidine-5'-monophosphate (dTMP) while utilizing 5,10-methylenetetrahydrofolate (mTHF) as the methyl donor and reductant in the reaction, yielding dihydrofolate (DHF) as a by-product. This enzymatic reaction provides an intracellular de novo source of dTMP, an essential precursor for DNA biosynthesis. In Pectobacterium carotovorum subsp. carotovorum (strain PC1), this protein is Thymidylate synthase.